Reading from the N-terminus, the 382-residue chain is Intermediate transcription factor 3 large subunit (382 aa).

Belongs to the orthopoxvirus OPG150 family. Heterodimerizes with protein A8 to form the virus intermediate transcription factor (VITF)-3.

Acts with RNA polymerase to initiate transcription from intermediate gene promoters. The polypeptide is Intermediate transcription factor 3 large subunit (OPG150) (Homo sapiens (Human)).